The primary structure comprises 432 residues: Transcobalamin-2 (432 aa).

Residues 1 to 18 form the signal peptide; it reads MGHLGALLFLLGGLGALA. Intrachain disulfides connect Cys-21-Cys-270, Cys-116-Cys-312, and Cys-165-Cys-208. Asn-94 carries an N-linked (GlcNAc...) asparagine glycan. Residues Gln-104, 152 to 156, His-193, 193 to 197, Asn-245, Ser-248, Gln-294, and 400 to 402 each bind cob(II)alamin; these read TSYYQ, HVSVD, and WQV.

Belongs to the eukaryotic cobalamin transport proteins family. In terms of assembly, interacts with CD320 (via LDL-receptor class A domains). Expressed in mammary gland, kidney, lymphatic nodes and liver.

Its subcellular location is the secreted. Functionally, primary vitamin B12-binding and transport protein. Delivers cobalamin to cells. The protein is Transcobalamin-2 (TCN2) of Bos taurus (Bovine).